Here is a 354-residue protein sequence, read N- to C-terminus: Thiamine thiazole synthase (354 aa).

Substrate-binding positions include Ala-83, Glu-104–Ala-105, Gly-112, and Val-177. Cys-210 carries the 2,3-didehydroalanine (Cys) modification. Substrate-binding positions include Asp-212, His-227, Met-305, and Arg-315–Gly-317.

This sequence belongs to the THI4 family. In terms of assembly, homooctamer. Requires Fe cation as cofactor. In terms of processing, during the catalytic reaction, a sulfide is transferred from Cys-210 to a reaction intermediate, generating a dehydroalanine residue.

Its subcellular location is the cytoplasm. It localises to the nucleus. The catalysed reaction is [ADP-thiazole synthase]-L-cysteine + glycine + NAD(+) = [ADP-thiazole synthase]-dehydroalanine + ADP-5-ethyl-4-methylthiazole-2-carboxylate + nicotinamide + 3 H2O + 2 H(+). In terms of biological role, involved in biosynthesis of the thiamine precursor thiazole. Catalyzes the conversion of NAD and glycine to adenosine diphosphate 5-(2-hydroxyethyl)-4-methylthiazole-2-carboxylic acid (ADT), an adenylated thiazole intermediate. The reaction includes an iron-dependent sulfide transfer from a conserved cysteine residue of the protein to a thiazole intermediate. The enzyme can only undergo a single turnover, which suggests it is a suicide enzyme. May have additional roles in adaptation to various stress conditions and in DNA damage tolerance. The polypeptide is Thiamine thiazole synthase (Candida albicans (strain SC5314 / ATCC MYA-2876) (Yeast)).